A 66-amino-acid chain; its full sequence is U10-theraphotoxin-Cg1a 2 (66 aa).

An N-terminal signal peptide occupies residues 1–21; sequence MKTSVLFVIFGLALLLCLSFA. A propeptide spanning residues 22–29 is cleaved from the precursor; sequence AELEDTGR. 3 cysteine pairs are disulfide-bonded: Cys-31/Cys-46, Cys-38/Cys-51, and Cys-45/Cys-58.

The protein belongs to the neurotoxin 10 (Hwtx-1) family. 29 (Jztx-13) subfamily. As to expression, expressed by the venom gland.

Its subcellular location is the secreted. Functionally, probable ion channel inhibitor. The sequence is that of U10-theraphotoxin-Cg1a 2 from Chilobrachys guangxiensis (Chinese earth tiger tarantula).